The chain runs to 148 residues: Large-conductance mechanosensitive channel (148 aa).

Transmembrane regions (helical) follow at residues 15-35 and 84-104; these read LDMA…KSLV and VGVF…VFLL.

The protein belongs to the MscL family. Homopentamer.

The protein localises to the cell inner membrane. Functionally, channel that opens in response to stretch forces in the membrane lipid bilayer. May participate in the regulation of osmotic pressure changes within the cell. This chain is Large-conductance mechanosensitive channel, found in Nitratidesulfovibrio vulgaris (strain DSM 19637 / Miyazaki F) (Desulfovibrio vulgaris).